Here is a 90-residue protein sequence, read N- to C-terminus: E22 protein (90 aa).

The sequence is that of E22 protein (43) from Bacillus subtilis (Bacteriophage SP01).